Consider the following 396-residue polypeptide: Protein NDRG1-B (396 aa).

The disordered stretch occupies residues 326-396 (RSRTGSAASS…NTPKSMEVSC (71 aa)). Residues 327–340 (SRTGSAASSSSQDG) show a composition bias toward low complexity. Repeat copies occupy residues 340 to 349 (GNRSRSHTNE), 350 to 359 (GSRSRSQTGD), 360 to 369 (GNRSRAHTGD), and 370 to 379 (GNRSRSHTDT). The 4 X 10 AA tandem repeats of G-[NS]-R-S-R-[AS]-[HQ]-T-[DGN]-[DET] stretch occupies residues 340–379 (GNRSRSHTNEGSRSRSQTGDGNRSRAHTGDGNRSRSHTDT). Over residues 366–377 (HTGDGNRSRSHT) the composition is skewed to basic and acidic residues. Residues 378–390 (DTNNVNSDHNTPK) are compositionally biased toward polar residues.

It belongs to the NDRG family.

May be involved in pronephros development, after specification of the pronephros. The chain is Protein NDRG1-B (ndrg1-b) from Xenopus laevis (African clawed frog).